The primary structure comprises 342 residues: tRNA-specific 2-thiouridylase MnmA (342 aa).

ATP-binding positions include 6–13 (LLSGGVDS) and L32. Catalysis depends on C92, which acts as the Nucleophile. C92 and C191 form a disulfide bridge. G116 contacts ATP. The segment at 138-140 (KDQ) is interaction with tRNA. Residue C191 is the Cysteine persulfide intermediate of the active site. The interval 293–294 (RY) is interaction with tRNA.

This sequence belongs to the MnmA/TRMU family.

It localises to the cytoplasm. It catalyses the reaction S-sulfanyl-L-cysteinyl-[protein] + uridine(34) in tRNA + AH2 + ATP = 2-thiouridine(34) in tRNA + L-cysteinyl-[protein] + A + AMP + diphosphate + H(+). In terms of biological role, catalyzes the 2-thiolation of uridine at the wobble position (U34) of tRNA, leading to the formation of s(2)U34. The sequence is that of tRNA-specific 2-thiouridylase MnmA from Helicobacter acinonychis (strain Sheeba).